Consider the following 218-residue polypeptide: Ribose-5-phosphate isomerase A (218 aa).

Residues 28–31, 81–84, and 94–97 contribute to the substrate site; these read TGST, DGAD, and KGGG. Glu-103 acts as the Proton acceptor in catalysis. Lys-121 serves as a coordination point for substrate.

It belongs to the ribose 5-phosphate isomerase family. Homodimer.

The enzyme catalyses aldehydo-D-ribose 5-phosphate = D-ribulose 5-phosphate. It functions in the pathway carbohydrate degradation; pentose phosphate pathway; D-ribose 5-phosphate from D-ribulose 5-phosphate (non-oxidative stage): step 1/1. Functionally, catalyzes the reversible conversion of ribose-5-phosphate to ribulose 5-phosphate. This chain is Ribose-5-phosphate isomerase A, found in Vibrio campbellii (strain ATCC BAA-1116).